We begin with the raw amino-acid sequence, 702 residues long: Flagellar operon control protein UmoB (702 aa).

5 consecutive transmembrane segments (helical) span residues 4–24 (SVII…FLFF), 204–224 (GFWN…ALMM), 227–247 (VFLP…LFLI), 343–363 (IIFV…QPLS), and 656–676 (GNTL…FFII).

It belongs to the IgaA family.

It localises to the cell inner membrane. In terms of biological role, up-regulator of flagellar flhDC master operon. The sequence is that of Flagellar operon control protein UmoB (umoB) from Proteus mirabilis.